The primary structure comprises 138 residues: ATP synthase epsilon chain (138 aa).

Over residues 89-114 (KDTAQQEWNEAQKRLDEASKSGDRQK) the composition is skewed to basic and acidic residues. Positions 89–117 (KDTAQQEWNEAQKRLDEASKSGDRQKQIQ) are disordered.

Belongs to the ATPase epsilon chain family. As to quaternary structure, F-type ATPases have 2 components, CF(1) - the catalytic core - and CF(0) - the membrane proton channel. CF(1) has five subunits: alpha(3), beta(3), gamma(1), delta(1), epsilon(1). CF(0) has three main subunits: a, b and c.

The protein resides in the cellular thylakoid membrane. Functionally, produces ATP from ADP in the presence of a proton gradient across the membrane. This Gloeothece citriformis (strain PCC 7424) (Cyanothece sp. (strain PCC 7424)) protein is ATP synthase epsilon chain.